We begin with the raw amino-acid sequence, 764 residues long: Dehydrocurvularin biosynthesis regulator (764 aa).

Residues 28–59 (CWECKRRKMKCIFDPRITSTSCNGCRQRGSPC) constitute a DNA-binding region (zn(2)-C6 fungal-type). Disordered regions lie at residues 73-94 (HGANDSASLDASTPIATPSDDA), 112-136 (YRYLPSSKSSDKRFTTRSSNDASTC), and 633-672 (FPTSINTNSDPVHVHSQADFPSSTQLSSSSHPNTPSPALS). Residues 77–88 (DSASLDASTPIA) are compositionally biased toward polar residues. Positions 663–672 (HPNTPSPALS) are enriched in polar residues.

The protein resides in the nucleus. Its function is as follows. Transcription factor involved in regulation of the dehydrocurvularin biosynthesis gene cluster. This is Dehydrocurvularin biosynthesis regulator from Alternaria cinerariae.